An 83-amino-acid polypeptide reads, in one-letter code: SPPVCGNKILEQGEDCDCGSPANCQDRCCNAATCKLTPGSQCNYGECCDQCRFKKAGTVCRIARGDWNDDYCTGKSSDCPWNH.

Residues 2–83 (PPVCGNKILE…GKSSDCPWNH (82 aa)) form the Disintegrin domain. 10 disulfides stabilise this stretch: C5–C24, C5–C34, C16–C29, C16–C34, C18–C24, C18–C29, C28–C51, C42–C48, C47–C72, and C60–C79. The Cell attachment site motif lies at 64–66 (RGD).

This sequence belongs to the venom metalloproteinase (M12B) family. P-II subfamily. P-IIa sub-subfamily. In terms of assembly, monomer. In terms of processing, exists in 3 forms in the venom. The forms A, B, and C are present at 53%, 32% and 15%. The forms A and B differ by their disulfide bond pattern in the N-terminal part. No information is known about form C. As to expression, expressed by the venom gland.

It is found in the secreted. Functionally, inhibits fibrinogen interaction with platelets. Acts by binding to alpha-IIb/beta-3 (ITGA2B/ITGB3) on the platelet surface and inhibits aggregation induced by ADP, thrombin, platelet-activating factor and collagen. This chain is Disintegrin bitistatin, found in Bitis arietans (African puff adder).